A 361-amino-acid polypeptide reads, in one-letter code: Anthranilate phosphoribosyltransferase (361 aa).

Residues glycine 80, 83–84 (GD), threonine 88, 90–93 (NVST), 108–116 (KHGNYSVSS), and serine 120 contribute to the 5-phospho-alpha-D-ribose 1-diphosphate site. Anthranilate is bound at residue glycine 80. Serine 92 contacts Mg(2+). Asparagine 111 contacts anthranilate. Anthranilate is bound at residue arginine 166. Positions 224 and 225 each coordinate Mg(2+). The tract at residues 338-361 (EGDGEAASTDSAAASTTAGPEDDD) is disordered. The span at 343-355 (AASTDSAAASTTA) shows a compositional bias: low complexity.

It belongs to the anthranilate phosphoribosyltransferase family. As to quaternary structure, homodimer. It depends on Mg(2+) as a cofactor.

The catalysed reaction is N-(5-phospho-beta-D-ribosyl)anthranilate + diphosphate = 5-phospho-alpha-D-ribose 1-diphosphate + anthranilate. It functions in the pathway amino-acid biosynthesis; L-tryptophan biosynthesis; L-tryptophan from chorismate: step 2/5. Catalyzes the transfer of the phosphoribosyl group of 5-phosphorylribose-1-pyrophosphate (PRPP) to anthranilate to yield N-(5'-phosphoribosyl)-anthranilate (PRA). This chain is Anthranilate phosphoribosyltransferase, found in Halorubrum lacusprofundi (strain ATCC 49239 / DSM 5036 / JCM 8891 / ACAM 34).